Reading from the N-terminus, the 483-residue chain is Altronate oxidoreductase (483 aa).

Residue 18-29 (IIQFGEGNFLRA) participates in NAD(+) binding.

It belongs to the mannitol dehydrogenase family. UxaB subfamily.

It catalyses the reaction D-altronate + NAD(+) = keto-D-tagaturonate + NADH + H(+). It functions in the pathway carbohydrate metabolism; pentose and glucuronate interconversion. The polypeptide is Altronate oxidoreductase (Yersinia pestis).